The chain runs to 146 residues: MLVVLLLIGMAAHSSLIVIAACILLILKLTNVNFIFSLLERRGLEMGLTFLLLSILVPLASGKASWQEIISSLASFSGLLAVAGGALATSLNTRGLNLLKADPEIVFGLLLGSILGIVFLHGIPVGPLMAAGITALLMQLARIFKP.

The next 4 helical transmembrane spans lie at 6–26, 46–66, 69–89, and 105–125; these read LLIG…ILLI, MGLT…KASW, IISS…ALAT, and IVFG…GIPV.

It belongs to the UPF0756 family.

It localises to the cell membrane. The polypeptide is UPF0756 membrane protein PTH_1817 (Pelotomaculum thermopropionicum (strain DSM 13744 / JCM 10971 / SI)).